Here is a 788-residue protein sequence, read N- to C-terminus: MTDKSTFLSVLFGGGSVYQDLDGDGEVEDAEILRRVEEEHAQTSDNSNSDNDSGNDSDVPTSLMVEGVQDPKPGSKRRQPHRMATLSNLQSSAGPGARSVSFAQGTKTQTPIRLTKPTGVANGGLPRHKQDLGASIRTMVDPKELALWKWANVQNLDNFFAEAYMYYTGKGLVSIILSRVLNMSTIMFVVVFSTYLGSCIDYSKIKGSRTLDEVHVKQCYAKLGSFHVFVLWTFFVLWFMKLFQYVKDIRRLVDMKSFYQELLEIDENELQTISWPQVAKRMATLSEANAATQVGNSTKQRIEPHDIANRVMRKENYLVAMFHKRVLNMTVPLPQPLQRIFGRPQLLSRALEWNLSLCILDYVFNPAGQVRPMFLKSTHKQILSTGLRRRFVFAAIMNVVFAPFIILYLALLYFFRYFNEYHKNPASIGTRRYNPLAEWKLREYNELPHQFERRLTLSYIPASKYLDQFPKEKTALVSKFVSFIAGSFAAVLGIASLIDPELFLMFEISANRTVLFYIGVFGSILAVSRSLIPEETLVFDPEISLRYVAEFTHYLPPEWEGKLHTEQVKNEFSLMYEMRLIILLKELASIFLAPFILYYSLTQSCDDIVDFIRDHSVHVDGLGYVCTFAMFDFKQKSPDHQPDEDQKMLKSYLYFMDHYGDKPTNVSQTQQNVPMYSSVRLKNDGLDLNNSIMQKFQKHNGHHALSGLTQRDVGLSPAAPTATTATSGTATGAAPRRDLINFDVDESFIDQTTSNRDMDNDEQPKDKERVVDMLNQFYKKTDNMNLGA.

Over 1 to 171 (MTDKSTFLSV…EAYMYYTGKG (171 aa)) the chain is Cytoplasmic. Basic and acidic residues predominate over residues 32-42 (ILRRVEEEHAQ). Positions 32-127 (ILRRVEEEHA…TGVANGGLPR (96 aa)) are disordered. The span at 44–58 (SDNSNSDNDSGNDSD) shows a compositional bias: low complexity. The segment covering 101 to 112 (SFAQGTKTQTPI) has biased composition (polar residues). A helical membrane pass occupies residues 172 to 192 (LVSIILSRVLNMSTIMFVVVF). Residues 193 to 222 (STYLGSCIDYSKIKGSRTLDEVHVKQCYAK) are Lumenal-facing. Residues 223-243 (LGSFHVFVLWTFFVLWFMKLF) traverse the membrane as a helical segment. The Cytoplasmic segment spans residues 244 to 390 (QYVKDIRRLV…QILSTGLRRR (147 aa)). Residue F391 is an intramembrane region. At 392-479 (VFAAIMNVVF…PKEKTALVSK (88 aa)) the chain is on the cytoplasmic side. Residues 480–500 (FVSFIAGSFAAVLGIASLIDP) form a helical membrane-spanning segment. The Lumenal segment spans residues 501-512 (ELFLMFEISANR). The chain crosses the membrane as a helical span at residues 513–533 (TVLFYIGVFGSILAVSRSLIP). Topologically, residues 534–579 (EETLVFDPEISLRYVAEFTHYLPPEWEGKLHTEQVKNEFSLMYEMR) are cytoplasmic. The stretch at 580-600 (LIILLKELASIFLAPFILYYS) is an intramembrane region. The Cytoplasmic segment spans residues 601-788 (LTQSCDDIVD…KKTDNMNLGA (188 aa)). A disordered region spans residues 715–736 (LSPAAPTATTATSGTATGAAPR). Residues 716–734 (SPAAPTATTATSGTATGAA) are compositionally biased toward low complexity.

It belongs to the ATG9 family. In terms of assembly, homotrimer; forms a homotrimer with a central pore that forms a path between the two membrane leaflets. Post-translationally, phosphorylated by ATG1. ATG1 phosphorylation is required for preautophagosome elongation.

It localises to the preautophagosomal structure membrane. It is found in the cytoplasmic vesicle membrane. The protein resides in the golgi apparatus membrane. Its subcellular location is the endoplasmic reticulum membrane. The enzyme catalyses a 1,2-diacyl-sn-glycero-3-phosphocholine(in) = a 1,2-diacyl-sn-glycero-3-phosphocholine(out). It catalyses the reaction a 1,2-diacyl-sn-glycero-3-phospho-L-serine(in) = a 1,2-diacyl-sn-glycero-3-phospho-L-serine(out). The catalysed reaction is a 1,2-diacyl-sn-glycero-3-phosphoethanolamine(in) = a 1,2-diacyl-sn-glycero-3-phosphoethanolamine(out). It carries out the reaction a 1,2-diacyl-sn-glycero-3-phospho-(1D-myo-inositol-3-phosphate)(in) = a 1,2-diacyl-sn-glycero-3-phospho-(1D-myo-inositol-3-phosphate)(out). Its function is as follows. Phospholipid scramblase involved in autophagy and cytoplasm to vacuole transport (Cvt) vesicle formation. Cycles between the preautophagosomal structure/phagophore assembly site (PAS) and the cytoplasmic vesicle pool and supplies membrane for the growing autophagosome. Lipid scramblase activity plays a key role in preautophagosomal structure/phagophore assembly by distributing the phospholipids that arrive through ATG2 from the cytoplasmic to the luminal leaflet of the bilayer, thereby driving autophagosomal membrane expansion. Required for mitophagy. Also involved in endoplasmic reticulum-specific autophagic process and is essential for the survival of cells subjected to severe ER stress. Different machineries are required for anterograde trafficking to the PAS during either the Cvt pathway or bulk autophagy and for retrograde trafficking. This is Autophagy-related protein 9 from Yarrowia lipolytica (strain CLIB 122 / E 150) (Yeast).